The following is a 432-amino-acid chain: Adenosylhomocysteinase (432 aa).

Positions 57, 131, and 156 each coordinate substrate. Residue 157–159 coordinates NAD(+); the sequence is TTT. Phosphoserine is present on S183. Substrate-binding residues include K186 and D190. Residue K186 is modified to N6-(2-hydroxyisobutyryl)lysine. The residue at position 193 (Y193) is a Phosphotyrosine. NAD(+)-binding positions include 222-227, E243, N248, 299-301, N346, H353, K426, 426-430, and Y430; these read GDVGKG, IGH, and KPDHY.

It belongs to the adenosylhomocysteinase family. As to quaternary structure, homotetramer. Interaction with AHCYL1. The cofactor is NAD(+).

The protein localises to the cytoplasm. It localises to the melanosome. It is found in the nucleus. Its subcellular location is the endoplasmic reticulum. The catalysed reaction is S-adenosyl-L-homocysteine + H2O = L-homocysteine + adenosine. The protein operates within amino-acid biosynthesis; L-homocysteine biosynthesis; L-homocysteine from S-adenosyl-L-homocysteine: step 1/1. Functionally, catalyzes the hydrolysis of S-adenosyl-L-homocysteine to form adenosine and homocysteine. Binds copper ions. In Rattus norvegicus (Rat), this protein is Adenosylhomocysteinase (Ahcy).